A 57-amino-acid polypeptide reads, in one-letter code: Large ribosomal subunit protein bL32c (57 aa).

A disordered region spans residues 1-21 (MAVPKKRTSKSKKNLRKNTWK).

The protein belongs to the bacterial ribosomal protein bL32 family.

The protein localises to the plastid. It is found in the chloroplast. The polypeptide is Large ribosomal subunit protein bL32c (Stigeoclonium helveticum (Green alga)).